The following is a 659-amino-acid chain: Homeobox protein slou (659 aa).

The segment covering 1-21 (MVMLQSPAQKASDSASAQNTA) has biased composition (polar residues). 6 disordered regions span residues 1–63 (MVML…PAAK), 94–152 (MSSE…SFSS), 198–298 (AQQH…AAPS), 316–349 (TQAS…PSGR), 376–440 (QIAA…DRDA), and 455–548 (PNKF…PRRA). 3 stretches are compositionally biased toward low complexity: residues 27–51 (SPNS…SVVS), 95–108 (SSES…LSPL), and 120–135 (HNNN…NSNT). Residues 136–152 (RRSQSPPASVGSVSFSS) are compositionally biased toward polar residues. A compositionally biased stretch (basic residues) spans 201 to 232 (HMHHHQHQHHQHPAHPHSHQHPHPHPHPHPHP). 7 tandem repeats follow at residues 221–222 (HP), 223–224 (HP), 225–226 (HP), 227–228 (HP), 229–230 (HP), 231–232 (HP), and 233–234 (HP). Residues 221 to 234 (HPHPHPHPHPHPHP) are 7 X 2 AA tandem repeats of H-P. 2 stretches are compositionally biased toward pro residues: residues 250-263 (PPSP…PPTS) and 275-286 (PIAPPQNPPHSS). Low complexity-rich tracts occupy residues 287–298 (QPPQQQQVAAPS) and 316–347 (TQAS…GSPS). The segment covering 388 to 401 (SEELNVDGNDEDSN) has biased composition (acidic residues). The segment covering 417–435 (RSVNSSAAANPSSASTSAS) has biased composition (low complexity). Composition is skewed to acidic residues over residues 478-492 (RDEE…DQSE) and 500-519 (NDMD…DPSS). Gly residues predominate over residues 528–543 (SRNGDGKSGGGGGGGS). The homeobox DNA-binding region spans 545-604 (PRRARTAFTYEQLVSLENKFKTTRYLSVCERLNLALSLSLTETQVKIWFQNRRTKWKKQN).

The protein belongs to the NK-1 homeobox family. In terms of tissue distribution, mesodermal precursor cells of distinct muscles during embryogenesis, a subset of neuronal cells of the CNS and their precursors and also in cells of a small region of the midgut.

It is found in the nucleus. In terms of biological role, may play a role in specifying the identity of particular somatic muscles and neurons of the CNS. The polypeptide is Homeobox protein slou (slou) (Drosophila melanogaster (Fruit fly)).